Consider the following 215-residue polypeptide: Large ribosomal subunit protein bL25 (215 aa).

Residues 192 to 203 show a composition bias toward acidic residues; it reads EEATEEEEEAAE. Residues 192–215 are disordered; that stretch reads EEATEEEEEAAEPEVIKRKEEEEE. A compositionally biased stretch (basic and acidic residues) spans 205-215; that stretch reads EVIKRKEEEEE.

It belongs to the bacterial ribosomal protein bL25 family. CTC subfamily. As to quaternary structure, part of the 50S ribosomal subunit; part of the 5S rRNA/L5/L18/L25 subcomplex. Contacts the 5S rRNA. Binds to the 5S rRNA independently of L5 and L18.

Its function is as follows. This is one of the proteins that binds to the 5S RNA in the ribosome where it forms part of the central protuberance. The polypeptide is Large ribosomal subunit protein bL25 (Thermotoga sp. (strain RQ2)).